A 201-amino-acid chain; its full sequence is Ras-related protein Rab-10 (201 aa).

A GTP-binding site is contributed by 16–23 (GDSGVGKT). Residues 38 to 46 (FISTIGIDF) carry the Effector region motif. GTP-binding positions include 64 to 68 (DTAGQ), 122 to 125 (NKCD), and 152 to 154 (SAK). Residues 175–201 (PDSTDEQSRDTVNPVQPQRQSSSGGCC) form a disordered region. The segment covering 184 to 201 (DTVNPVQPQRQSSSGGCC) has biased composition (polar residues). 2 S-geranylgeranyl cysteine lipidation sites follow: Cys200 and Cys201.

Belongs to the small GTPase superfamily. Rab family. In terms of assembly, interacts (GTP-bound form) with ehbp-1 (via C-terminal coiled coil). Interacts (GTP-bound form) with cnt-1 (via C-terminal ankyrin repeat). Interacts (GTP-bound form) with rab-5 GAP, tbc-2 (via putative coiled coil domain). Interacts (GTP-bound form) with amph-1. Almost ubiquitously expressed. Expressed in intestine, hypodermis, seam cells, body-wall muscles, many neurons, oviduct sheath cell, spermatheca, coelomocytes and pharyngeal and nerve ring.

It localises to the early endosome membrane. The protein localises to the late endosome membrane. Its subcellular location is the golgi apparatus membrane. It is found in the endosome membrane. The enzyme catalyses GTP + H2O = GDP + phosphate + H(+). With respect to regulation, rab activation is generally mediated by a guanine exchange factor (GEF), while inactivation through hydrolysis of bound GTP is catalyzed by a GTPase activating protein (GAP). Tbc-4 is a likely GAP of this rab. Denn-4 is a putative GEF of this rab. In terms of biological role, the small GTPases Rab are key regulators of intracellular membrane trafficking, from the formation of transport vesicles to their fusion with membranes. Rabs cycle between an inactive GDP-bound form and an active GTP-bound form that is able to recruit to membranes different set of downstream effectors directly responsible for vesicle formation, movement, tethering and fusion. Required for basolateral endocytic recycling, the return of macromolecules and fluid from endosomes to the plasma membrane, in polarized epithelial cells of the intestine upstream of rme-1. Involved in the formation of the endosomal tubular network that is required for basolateral recycling of clathrin-independent endocytic cargo such as daf-4 in the intestine. Required for the recruitment of cnt-1 effector to endosomal membranes in the intestinal epithelium, which is important for the regulation of levels of endosomal phosphatidylinositol-4,5-bisphosphate, a key phosphoinositide in membrane traffic, and for the recruitment of endosomal membrane-bending proteins, rme-1 and sdpn-1. Recruits the rab-5 GTPase-activating protein tbc-2 to endosomes where it then inactivates rab-5 resulting in removal of rab-5 from membranes, which is necessary for cargo transport from early endosomes to recycling endosomes in the basolateral intestine. Regulates recycling of synaptic membrane AMPA glutamate receptor, glr-1, from intracellular endosomal compartments back to synapses in a cholesterol-dependent endocytosis pathway functioning after clathrin-independent endocytosis in command interneurons. Regulates neuropeptide release from dense core vesicles (DCVs) of cholinergic motoneurons in cooperation with rab-5. They reciprocally recruit each other's inactivating GAP molecule leading to local exclusion of one or the other rab protein at the Golgi-endosomal interphase at an essential stage during DCV sorting. Regulates membrane trafficking of membranes and dendrite proteins from the Golgi and/or endosomal compartments to plasma membrane during dendrite morphogenesis together with the exocyst complex in the multi-dendritic PVD sensory neurons acting in a cell-autonomous manner and requiring its GTPase activity. Functions cell-autonomously together with the exocyst complex to regulate dendrite morphogenesis and anterior-posterior patterning of the PVD neurons dendritic arbor by balancing the anterograde and retrograde transport via molecular motors unc-116 (kinesin heavy chain) and dhc-1 (dynein heavy chain) to appropriately transport branching factors, such as dma-1, to the specific subcellular regions of the developing dendrite in its GTPase activity-dependent manner. This is Ras-related protein Rab-10 from Caenorhabditis elegans.